Here is a 163-residue protein sequence, read N- to C-terminus: Probable RNA-binding protein EIF1AD (163 aa).

Residues 18–96 (MMEDDYELPT…VKAEISKILT (79 aa)) form the S1-like domain. The tract at residues 106 to 163 (AGIWPERFAKNPPQEAKAQNDDEDSDFEDDLTPNTNRPVQESDEEDEDTDTESSDEED) is disordered. Acidic residues-rich tracts occupy residues 126-136 (DDEDSDFEDDL) and 146-163 (ESDE…DEED).

The protein belongs to the EIF1AD family.

The polypeptide is Probable RNA-binding protein EIF1AD (Drosophila pseudoobscura pseudoobscura (Fruit fly)).